A 224-amino-acid polypeptide reads, in one-letter code: Large ribosomal subunit protein uL4 (224 aa).

The segment at 54-73 (NRSEVSHSTKKPFRQKGTGN) is disordered.

This sequence belongs to the universal ribosomal protein uL4 family. As to quaternary structure, part of the 50S ribosomal subunit.

One of the primary rRNA binding proteins, this protein initially binds near the 5'-end of the 23S rRNA. It is important during the early stages of 50S assembly. It makes multiple contacts with different domains of the 23S rRNA in the assembled 50S subunit and ribosome. Functionally, forms part of the polypeptide exit tunnel. The polypeptide is Large ribosomal subunit protein uL4 (Chlamydia felis (strain Fe/C-56) (Chlamydophila felis)).